The following is a 177-amino-acid chain: MKSLAVAKRYASALFELAREKGAIDSISHDFEVLEKAIQETPDVKKVLDNPVLIPAAKKELLEKLFPDFNPITKSFLKLLVDKRREVYLPEIIALFAEKLREERGEMLVEVESARELKGDLSDLIKEKLSRLTGKKVTMKVRTNPDLIGGIVVRVGNKVYDGSIKNQLYRLKRSIYG.

The protein belongs to the ATPase delta chain family. In terms of assembly, F-type ATPases have 2 components, F(1) - the catalytic core - and F(0) - the membrane proton channel. F(1) has five subunits: alpha(3), beta(3), gamma(1), delta(1), epsilon(1). F(0) has three main subunits: a(1), b(2) and c(10-14). The alpha and beta chains form an alternating ring which encloses part of the gamma chain. F(1) is attached to F(0) by a central stalk formed by the gamma and epsilon chains, while a peripheral stalk is formed by the delta and b chains.

Its subcellular location is the cell membrane. Its function is as follows. F(1)F(0) ATP synthase produces ATP from ADP in the presence of a proton or sodium gradient. F-type ATPases consist of two structural domains, F(1) containing the extramembraneous catalytic core and F(0) containing the membrane proton channel, linked together by a central stalk and a peripheral stalk. During catalysis, ATP synthesis in the catalytic domain of F(1) is coupled via a rotary mechanism of the central stalk subunits to proton translocation. Functionally, this protein is part of the stalk that links CF(0) to CF(1). It either transmits conformational changes from CF(0) to CF(1) or is implicated in proton conduction. In Carboxydothermus hydrogenoformans (strain ATCC BAA-161 / DSM 6008 / Z-2901), this protein is ATP synthase subunit delta.